The chain runs to 166 residues: MRQGLVPKKVFFTSGVGRHREMLESFEMALRDAGIEKFNLVTVSSILPPDCEIVQKSEGLPSLYPGEIVFTVMSRNSSNEPSRRIAASIGCAIPKDPVKNFGYLSEHHSYGETEQYAGMYAEKLAENMLFTWTKEKPGKTMNISKTAEVDDEGNWTTVISAAVFIL.

Pyruvic acid (Ser) is present on Ser45.

This sequence belongs to the PdaD family. Pyruvate serves as cofactor.

It carries out the reaction L-arginine + H(+) = agmatine + CO2. In Methanocella arvoryzae (strain DSM 22066 / NBRC 105507 / MRE50), this protein is Pyruvoyl-dependent arginine decarboxylase.